A 421-amino-acid chain; its full sequence is Serine hydroxymethyltransferase (421 aa).

(6S)-5,6,7,8-tetrahydrofolate is bound by residues L121 and 125–127 (GHL). K230 carries the N6-(pyridoxal phosphate)lysine modification. (6S)-5,6,7,8-tetrahydrofolate-binding positions include E246 and 354–356 (SPF).

This sequence belongs to the SHMT family. In terms of assembly, homodimer. Pyridoxal 5'-phosphate serves as cofactor.

The protein localises to the cytoplasm. The enzyme catalyses (6R)-5,10-methylene-5,6,7,8-tetrahydrofolate + glycine + H2O = (6S)-5,6,7,8-tetrahydrofolate + L-serine. It participates in one-carbon metabolism; tetrahydrofolate interconversion. It functions in the pathway amino-acid biosynthesis; glycine biosynthesis; glycine from L-serine: step 1/1. Its function is as follows. Catalyzes the reversible interconversion of serine and glycine with tetrahydrofolate (THF) serving as the one-carbon carrier. This reaction serves as the major source of one-carbon groups required for the biosynthesis of purines, thymidylate, methionine, and other important biomolecules. Also exhibits THF-independent aldolase activity toward beta-hydroxyamino acids, producing glycine and aldehydes, via a retro-aldol mechanism. The protein is Serine hydroxymethyltransferase of Rickettsia felis (strain ATCC VR-1525 / URRWXCal2) (Rickettsia azadi).